The primary structure comprises 611 residues: Threonine--tRNA ligase (611 aa).

The interval 211 to 509 (DHRKLGTELE…LTEHYAGEFP (299 aa)) is catalytic. Cys-310, His-361, and His-486 together coordinate Zn(2+).

Belongs to the class-II aminoacyl-tRNA synthetase family. In terms of assembly, homodimer. Zn(2+) serves as cofactor.

Its subcellular location is the cytoplasm. It catalyses the reaction tRNA(Thr) + L-threonine + ATP = L-threonyl-tRNA(Thr) + AMP + diphosphate + H(+). Functionally, catalyzes the attachment of threonine to tRNA(Thr) in a two-step reaction: L-threonine is first activated by ATP to form Thr-AMP and then transferred to the acceptor end of tRNA(Thr). Also edits incorrectly charged L-seryl-tRNA(Thr). The polypeptide is Threonine--tRNA ligase (Nautilia profundicola (strain ATCC BAA-1463 / DSM 18972 / AmH)).